Reading from the N-terminus, the 83-residue chain is RNA-binding protein Hfq (83 aa).

Residues 10–70 (DTFLNQVRKE…ISTVMPLRPI (61 aa)) form the Sm domain.

This sequence belongs to the Hfq family. As to quaternary structure, homohexamer.

RNA chaperone that binds small regulatory RNA (sRNAs) and mRNAs to facilitate mRNA translational regulation in response to envelope stress, environmental stress and changes in metabolite concentrations. Also binds with high specificity to tRNAs. The chain is RNA-binding protein Hfq from Desulfitobacterium hafniense (strain Y51).